Reading from the N-terminus, the 435-residue chain is U-box domain-containing protein 36 (435 aa).

Residues Glu227–Ala345 are a coiled coil. One can recognise a U-box domain in the interval Glu352–Leu426.

It carries out the reaction S-ubiquitinyl-[E2 ubiquitin-conjugating enzyme]-L-cysteine + [acceptor protein]-L-lysine = [E2 ubiquitin-conjugating enzyme]-L-cysteine + N(6)-ubiquitinyl-[acceptor protein]-L-lysine.. Its pathway is protein modification; protein ubiquitination. Functionally, functions as an E3 ubiquitin ligase. In Arabidopsis thaliana (Mouse-ear cress), this protein is U-box domain-containing protein 36 (PUB36).